The chain runs to 167 residues: NADH-quinone oxidoreductase subunit B 2 (167 aa).

[4Fe-4S] cluster contacts are provided by Cys-38, Cys-39, Cys-103, and Cys-132.

Belongs to the complex I 20 kDa subunit family. In terms of assembly, NDH-1 is composed of 14 different subunits. Subunits NuoB, C, D, E, F, and G constitute the peripheral sector of the complex. Requires [4Fe-4S] cluster as cofactor.

The protein resides in the cell inner membrane. It catalyses the reaction a quinone + NADH + 5 H(+)(in) = a quinol + NAD(+) + 4 H(+)(out). In terms of biological role, NDH-1 shuttles electrons from NADH, via FMN and iron-sulfur (Fe-S) centers, to quinones in the respiratory chain. The immediate electron acceptor for the enzyme in this species is believed to be ubiquinone. Couples the redox reaction to proton translocation (for every two electrons transferred, four hydrogen ions are translocated across the cytoplasmic membrane), and thus conserves the redox energy in a proton gradient. The protein is NADH-quinone oxidoreductase subunit B 2 of Rhizobium etli (strain CIAT 652).